Consider the following 154-residue polypeptide: GVQKTEVEATSTVPAQKLYAGLLLDIDDILPKAFPQAIKSSEIIEGDGGVGTVKLVTLGEASQFNTMKQRIDAIDKDALTYTYSIIGGDILLDIIESIVNHFTIVPTPDGGSIVKNTTIYNTIGDAVIPEENIKDATEKAGLIFKAVEAYLLAN.

This sequence belongs to the BetVI family.

It localises to the cytoplasm. Its function is as follows. Catalyzes the two-stage endonucleolytic cleavage to 3'-phosphomononucleotides and 3'-phosphooligonucleotides with 2',3'-cyclic phosphate intermediates. This is Ribonuclease 1 from Panax ginseng (Korean ginseng).